Reading from the N-terminus, the 541-residue chain is Propionyl-CoA carboxylase beta chain, mitochondrial (541 aa).

The N-terminal 28 residues, 1–28 (MAAAIRIRAVAAGARLSVLNCGLGITTR), are a transit peptide targeting the mitochondrion. The 259-residue stretch at 34–292 (PVSVKERIDN…SSQDPAPIRE (259 aa)) folds into the CoA carboxyltransferase N-terminal domain. The segment at 34 to 535 (PVSVKERIDN…SKKVHRPWRK (502 aa)) is carboxyltransferase. At S73 the chain carries Phosphoserine. Position 101 is an N6-acetyllysine; alternate (K101). At K101 the chain carries N6-succinyllysine; alternate. Residue K250 is modified to N6-succinyllysine. In terms of domain architecture, CoA carboxyltransferase C-terminal spans 296-535 (PSDRLVPELD…SKKVHRPWRK (240 aa)). The segment at 327–360 (DEREFFEIMPSYAKNIVVGFARMNGRTVGIVGNQ) is acyl-CoA binding. N6-acetyllysine; alternate is present on residues K476 and K491. Residues K476 and K491 each carry the N6-succinyllysine; alternate modification.

This sequence belongs to the AccD/PCCB family. As to quaternary structure, the holoenzyme is a dodecamer composed of 6 PCCA/alpha subunits and 6 PCCB/beta subunits. In terms of tissue distribution, broadly expressed. Most abundantly expressed in the kidney, liver, small intestine and stomach.

The protein resides in the mitochondrion matrix. It carries out the reaction propanoyl-CoA + hydrogencarbonate + ATP = (S)-methylmalonyl-CoA + ADP + phosphate + H(+). It catalyses the reaction butanoyl-CoA + hydrogencarbonate + ATP = (2S)-ethylmalonyl-CoA + ADP + phosphate + H(+). It participates in metabolic intermediate metabolism; propanoyl-CoA degradation; succinyl-CoA from propanoyl-CoA: step 1/3. In terms of biological role, this is one of the 2 subunits of the biotin-dependent propionyl-CoA carboxylase (PCC), a mitochondrial enzyme involved in the catabolism of odd chain fatty acids, branched-chain amino acids isoleucine, threonine, methionine, and valine and other metabolites. Propionyl-CoA carboxylase catalyzes the carboxylation of propionyl-CoA/propanoyl-CoA to D-methylmalonyl-CoA/(S)-methylmalonyl-CoA. Within the holoenzyme, the alpha subunit catalyzes the ATP-dependent carboxylation of the biotin carried by the biotin carboxyl carrier (BCC) domain, while the beta subunit then transfers the carboxyl group from carboxylated biotin to propionyl-CoA. Propionyl-CoA carboxylase also significantly acts on butyryl-CoA/butanoyl-CoA, which is converted to ethylmalonyl-CoA/(2S)-ethylmalonyl-CoA. Other alternative minor substrates include (2E)-butenoyl-CoA/crotonoyl-CoA. This chain is Propionyl-CoA carboxylase beta chain, mitochondrial, found in Mus musculus (Mouse).